Here is a 272-residue protein sequence, read N- to C-terminus: Undecaprenyl-diphosphatase (272 aa).

8 helical membrane-spanning segments follow: residues 1-21 (MSTL…FLPI), 39-59 (QGLA…MMYF), 91-111 (WWIL…KDFI), 117-137 (SALV…FADI), 151-171 (LGLK…IPGT), 196-216 (FLLS…KLIL), 228-248 (LGSL…LILL), and 251-271 (LGMM…LWFI).

Belongs to the UppP family.

Its subcellular location is the cell inner membrane. It carries out the reaction di-trans,octa-cis-undecaprenyl diphosphate + H2O = di-trans,octa-cis-undecaprenyl phosphate + phosphate + H(+). Functionally, catalyzes the dephosphorylation of undecaprenyl diphosphate (UPP). Confers resistance to bacitracin. In Colwellia psychrerythraea (strain 34H / ATCC BAA-681) (Vibrio psychroerythus), this protein is Undecaprenyl-diphosphatase.